A 219-amino-acid chain; its full sequence is Octanoyltransferase (219 aa).

The 176-residue stretch at Asp31–Gln206 folds into the BPL/LPL catalytic domain. Substrate-binding positions include Arg70–His77, Ser137–Gly139, and Gly150–Ala152. Cys168 acts as the Acyl-thioester intermediate in catalysis.

This sequence belongs to the LipB family.

It localises to the cytoplasm. It catalyses the reaction octanoyl-[ACP] + L-lysyl-[protein] = N(6)-octanoyl-L-lysyl-[protein] + holo-[ACP] + H(+). Its pathway is protein modification; protein lipoylation via endogenous pathway; protein N(6)-(lipoyl)lysine from octanoyl-[acyl-carrier-protein]: step 1/2. In terms of biological role, catalyzes the transfer of endogenously produced octanoic acid from octanoyl-acyl-carrier-protein onto the lipoyl domains of lipoate-dependent enzymes. Lipoyl-ACP can also act as a substrate although octanoyl-ACP is likely to be the physiological substrate. This Vibrio atlanticus (strain LGP32) (Vibrio splendidus (strain Mel32)) protein is Octanoyltransferase.